The chain runs to 665 residues: Protein-arginine deiminase type-2 (665 aa).

Ca(2+)-binding residues include Asp123, Asp125, Asp127, Val129, Glu131, Asn154, Asp156, Glu158, Asp166, Asp169, Lys171, Asp177, Asp180, Glu354, Asp389, Phe408, Leu411, and Glu412. Cys647 (nucleophile) is an active-site residue.

Belongs to the protein arginine deiminase family. In terms of assembly, homodimer. The cofactor is Ca(2+). Detected in keratinocytes in epidermis (at protein level).

Its subcellular location is the cytoplasm. It carries out the reaction L-arginyl-[protein] + H2O = L-citrullyl-[protein] + NH4(+). Its function is as follows. Catalyzes the deimination of arginine residues of proteins. The polypeptide is Protein-arginine deiminase type-2 (PADI2) (Homo sapiens (Human)).